Consider the following 310-residue polypeptide: Ribosomal RNA small subunit methyltransferase H (310 aa).

Residues 33 to 35, aspartate 52, phenylalanine 79, aspartate 98, and glutamine 105 each bind S-adenosyl-L-methionine; that span reads GGH.

It belongs to the methyltransferase superfamily. RsmH family.

The protein resides in the cytoplasm. It catalyses the reaction cytidine(1402) in 16S rRNA + S-adenosyl-L-methionine = N(4)-methylcytidine(1402) in 16S rRNA + S-adenosyl-L-homocysteine + H(+). Its function is as follows. Specifically methylates the N4 position of cytidine in position 1402 (C1402) of 16S rRNA. The protein is Ribosomal RNA small subunit methyltransferase H of Campylobacter jejuni subsp. jejuni serotype O:23/36 (strain 81-176).